A 346-amino-acid polypeptide reads, in one-letter code: Methylthioribose-1-phosphate isomerase (346 aa).

Substrate-binding positions include 48–50, Arg-88, and Gln-192; that span reads RGA. Residue Asp-233 is the Proton donor of the active site. 243-244 contacts substrate; the sequence is NK.

It belongs to the eIF-2B alpha/beta/delta subunits family. MtnA subfamily.

It carries out the reaction 5-(methylsulfanyl)-alpha-D-ribose 1-phosphate = 5-(methylsulfanyl)-D-ribulose 1-phosphate. It participates in amino-acid biosynthesis; L-methionine biosynthesis via salvage pathway; L-methionine from S-methyl-5-thio-alpha-D-ribose 1-phosphate: step 1/6. Functionally, catalyzes the interconversion of methylthioribose-1-phosphate (MTR-1-P) into methylthioribulose-1-phosphate (MTRu-1-P). The sequence is that of Methylthioribose-1-phosphate isomerase from Alcanivorax borkumensis (strain ATCC 700651 / DSM 11573 / NCIMB 13689 / SK2).